A 451-amino-acid chain; its full sequence is tRNA modification GTPase MnmE (451 aa).

(6S)-5-formyl-5,6,7,8-tetrahydrofolate contacts are provided by arginine 25, glutamate 87, and arginine 127. The TrmE-type G domain occupies glycine 222–glycine 374. Asparagine 232 is a K(+) binding site. GTP-binding positions include asparagine 232 to serine 237, threonine 251 to threonine 257, and aspartate 276 to glycine 279. Serine 236 lines the Mg(2+) pocket. Positions 251, 253, and 256 each coordinate K(+). Threonine 257 provides a ligand contact to Mg(2+). Lysine 451 is a (6S)-5-formyl-5,6,7,8-tetrahydrofolate binding site.

This sequence belongs to the TRAFAC class TrmE-Era-EngA-EngB-Septin-like GTPase superfamily. TrmE GTPase family. In terms of assembly, homodimer. Heterotetramer of two MnmE and two MnmG subunits. Requires K(+) as cofactor.

The protein localises to the cytoplasm. Functionally, exhibits a very high intrinsic GTPase hydrolysis rate. Involved in the addition of a carboxymethylaminomethyl (cmnm) group at the wobble position (U34) of certain tRNAs, forming tRNA-cmnm(5)s(2)U34. In Synechococcus sp. (strain CC9902), this protein is tRNA modification GTPase MnmE.